The primary structure comprises 84 residues: Small ribosomal subunit protein uS17 (84 aa).

Belongs to the universal ribosomal protein uS17 family. Part of the 30S ribosomal subunit.

In terms of biological role, one of the primary rRNA binding proteins, it binds specifically to the 5'-end of 16S ribosomal RNA. This chain is Small ribosomal subunit protein uS17, found in Borrelia recurrentis (strain A1).